The primary structure comprises 570 residues: MLTDIEISRQATPQPISDIAKKFGIKKDELSQFGDAKAKVKISILDRVKDNVEGKLVIVTAVTPTPFGEGKTVTSIGLTQGLNAIGRKTCACIRQPSMGPVFGIKGGAAGGGYSQVIPMEEMNLHLTGDIHAVSSAHNLAAAAVDARLFHESRLSADEYTLQSGSAPLNIDPEQILWRRVVDHNERSLRNITVGLGDINGPVHASGFDITAASELMAILALSHDLKDMRKRIGRLVLALDKHAQPITAEMIGVAGAMTVIMSNAIEPTLMQTLTGDPCLIHAGPFANIAHGNSSIIADRIALKFADFVVTEGGFGSDMGFEKFCNIKVRESGKAPDAAVLVVTLKALKANSGLESKQDINLPDQARLEAGFLNLKWHMDNVSQYGVPVVVALNRFPSDTQEELEWLKREVMLAGAFGCEISDAFSLGANGAEALAHKVVEATEQDSDFRLLYSSDASIEAKLLTIAESGYGARGVVLSDEAKAQLEQIKAMGLDNLAVCIAKTPLSISHDPLLKGVPQGFELPIAQLKINAGAGFITALVGKVMTMPGLGVKPGYLNIDINEQDEIVGLA.

Position 65 to 72 (65 to 72 (TPFGEGKT)) interacts with ATP.

It belongs to the formate--tetrahydrofolate ligase family.

It carries out the reaction (6S)-5,6,7,8-tetrahydrofolate + formate + ATP = (6R)-10-formyltetrahydrofolate + ADP + phosphate. It participates in one-carbon metabolism; tetrahydrofolate interconversion. The protein is Formate--tetrahydrofolate ligase of Shewanella woodyi (strain ATCC 51908 / MS32).